The sequence spans 305 residues: Tyrosine recombinase XerC (305 aa).

Residues 4 to 95 (TSIQALINKW…AVKNFYRFLE (92 aa)) enclose the Core-binding (CB) domain. The region spanning 116–298 (LLPKALSEDD…SIKHLEAVYT (183 aa)) is the Tyr recombinase domain. Catalysis depends on residues R159, K182, H250, R253, and H276. The O-(3'-phospho-DNA)-tyrosine intermediate role is filled by Y285.

It belongs to the 'phage' integrase family. XerC subfamily. In terms of assembly, forms a cyclic heterotetrameric complex composed of two molecules of XerC and two molecules of XerD.

It is found in the cytoplasm. In terms of biological role, site-specific tyrosine recombinase, which acts by catalyzing the cutting and rejoining of the recombining DNA molecules. The XerC-XerD complex is essential to convert dimers of the bacterial chromosome into monomers to permit their segregation at cell division. It also contributes to the segregational stability of plasmids. This Rickettsia rickettsii (strain Iowa) protein is Tyrosine recombinase XerC.